The chain runs to 359 residues: 3-dehydroquinate synthase (359 aa).

Residues 71 to 76 (DGEAYK), 105 to 109 (GVVGD), 129 to 130 (TT), Lys-142, and Lys-151 contribute to the NAD(+) site. Zn(2+)-binding residues include Glu-184, His-247, and His-264.

It belongs to the sugar phosphate cyclases superfamily. Dehydroquinate synthase family. It depends on Co(2+) as a cofactor. Zn(2+) serves as cofactor. NAD(+) is required as a cofactor.

Its subcellular location is the cytoplasm. It catalyses the reaction 7-phospho-2-dehydro-3-deoxy-D-arabino-heptonate = 3-dehydroquinate + phosphate. The protein operates within metabolic intermediate biosynthesis; chorismate biosynthesis; chorismate from D-erythrose 4-phosphate and phosphoenolpyruvate: step 2/7. Catalyzes the conversion of 3-deoxy-D-arabino-heptulosonate 7-phosphate (DAHP) to dehydroquinate (DHQ). This Burkholderia cenocepacia (strain HI2424) protein is 3-dehydroquinate synthase.